The chain runs to 305 residues: Oxygen-dependent coproporphyrinogen-III oxidase (305 aa).

Ser-99 contributes to the substrate binding site. A divalent metal cation contacts are provided by His-103 and His-113. The active-site Proton donor is the His-113. Residue 115–117 (NVR) coordinates substrate. Residues His-152 and His-182 each contribute to the a divalent metal cation site. Residues 247–282 (YVEFNLVLDRGTLFGLQTGGRTESILMSMPPLARWE) are important for dimerization. A substrate-binding site is contributed by 265–267 (GGR).

This sequence belongs to the aerobic coproporphyrinogen-III oxidase family. Homodimer. The cofactor is a divalent metal cation.

Its subcellular location is the cytoplasm. It catalyses the reaction coproporphyrinogen III + O2 + 2 H(+) = protoporphyrinogen IX + 2 CO2 + 2 H2O. It functions in the pathway porphyrin-containing compound metabolism; protoporphyrin-IX biosynthesis; protoporphyrinogen-IX from coproporphyrinogen-III (O2 route): step 1/1. Involved in the heme biosynthesis. Catalyzes the aerobic oxidative decarboxylation of propionate groups of rings A and B of coproporphyrinogen-III to yield the vinyl groups in protoporphyrinogen-IX. The protein is Oxygen-dependent coproporphyrinogen-III oxidase of Vibrio cholerae serotype O1 (strain ATCC 39541 / Classical Ogawa 395 / O395).